Reading from the N-terminus, the 374-residue chain is Autophagy-related protein 18e (374 aa).

WD repeat units lie at residues 28 to 66 (KSDLKVLSVAWNQVCSGFIVGTNHGFNVYSCKPMIKKSI), 72 to 117 (ESGF…CLSE), 202 to 242 (AHDS…LLQE), and 247 to 286 (VERAEIYNVAISSNLKWVAASSEKGTLHVFRLRPDILSFD).

This sequence belongs to the WD repeat PROPPIN family. As to quaternary structure, component of the PI(3,5)P2 regulatory complex at least composed of ATG18, SAC/FIG4, FAB1 and VAC14.

Its subcellular location is the preautophagosomal structure membrane. It is found in the vacuole membrane. In terms of biological role, the PI(3,5)P2 regulatory complex regulates both the synthesis and turnover of phosphatidylinositol 3,5-bisphosphate (PtdIns(3,5)P2). Required for autophagy. This chain is Autophagy-related protein 18e (ATG18E), found in Arabidopsis thaliana (Mouse-ear cress).